Here is a 373-residue protein sequence, read N- to C-terminus: PqqA peptide cyclase (373 aa).

Residues 7–227 (ILNPVGLLAE…EVYAGVIVID (221 aa)) form the Radical SAM core domain. Residues cysteine 21, cysteine 25, and cysteine 28 each contribute to the [4Fe-4S] cluster site.

It belongs to the radical SAM superfamily. PqqE family. In terms of assembly, interacts with PqqD. The interaction is necessary for activity of PqqE. [4Fe-4S] cluster serves as cofactor.

The enzyme catalyses [PQQ precursor protein] + S-adenosyl-L-methionine = E-Y cross-linked-[PQQ precursor protein] + 5'-deoxyadenosine + L-methionine + H(+). The protein operates within cofactor biosynthesis; pyrroloquinoline quinone biosynthesis. Catalyzes the cross-linking of a glutamate residue and a tyrosine residue in the PqqA protein as part of the biosynthesis of pyrroloquinoline quinone (PQQ). The chain is PqqA peptide cyclase from Methylocella silvestris (strain DSM 15510 / CIP 108128 / LMG 27833 / NCIMB 13906 / BL2).